The following is a 934-amino-acid chain: MLKLLLGDPNARKLKRYQPIVSDIQLLEEEIAPLSDDELRGRTAAFQERLANAGSLANQRPILDEILPEAFAVVREAGKRVLGMRHFDVQLIGGMVLHEGQIAEMKTGEGKTLVATLPSYLNALTGRGVHVVTVNDYLARRDAEWMGQVHRFLGLSVGLIQQDMRPEERRRNYNCDITYATNSELGFDYLRDNMAADISEVVQREFQYCVIDEVDSILIDEARTPLIISGQVERPQEKYQQAAEVANALARAAELSKDGIDPEGDYEVDEKQRSCTLTDEGFAKAEQMLGVADLFNPQDPWAHYITNALKAKELFVKDVNYIVRDGEAVIVDEFTGRVMPGRRWSDGQHQAIEAKEALAIQSETQTLASITYQNFFLLYPRLAGMTGTAKTEEVEFEKTYKLETTIVPTNRVRARQDWADQVYKTEAAKWRAVANETAEIHKNGRPVLVGTTSVEKSELLSSLLAEQEIPHNLLNAKPENVERESEIVAQAGRAGAVTIATNMAGRGTDIILGGNSDYMARLKLREVLLGRLVKPEEDHTPPVPLQRSAPGGFSDAAAPSLPRSGESLYPCPLTDDTDQALGQLARDLVKAWGDRALTVIELEERIATAAEKAPTEAPQIQALREAIARVKGEYDAVVKQEESRVREAGGLHVIGTERHESRRVDNQLRGRAGRQGDPGSTRFFLSLGDNLLRIFGGDRVAGLMNAFRVEEDMPIESGMLTRSLEGAQKKVETYYYDIRKQVFEYDEVMNNQRRAVYSERRRVLDGRALKKQVIGYGERTMGEIVEAYVNPDLPPEEWDLDQLVGKVKEFIYLLEDLTPDQVQGLGMEELKAFLQEQLRNAYDLKEGQIEQQRPGLMREAERFFILQQIDTLWREHLQAMDALRESVGLRGYGQKDPLIEYKNEGYDMFLEMMTNMRRNVIYSMFMFQPQAPKN.

ATP contacts are provided by residues Gln90, 108–112 (GEGKT), and Asp509. The tract at residues 535-565 (PEEDHTPPVPLQRSAPGGFSDAAAPSLPRSG) is disordered.

It belongs to the SecA family. In terms of assembly, monomer and homodimer. Part of the essential Sec protein translocation apparatus which comprises SecA, SecYEG and auxiliary proteins SecDF. Other proteins may also be involved.

It localises to the cell inner membrane. Its subcellular location is the cellular thylakoid membrane. The protein resides in the cytoplasm. The catalysed reaction is ATP + H2O + cellular proteinSide 1 = ADP + phosphate + cellular proteinSide 2.. Its function is as follows. Part of the Sec protein translocase complex. Interacts with the SecYEG preprotein conducting channel. Has a central role in coupling the hydrolysis of ATP to the transfer of proteins into and across the cell membrane, serving as an ATP-driven molecular motor driving the stepwise translocation of polypeptide chains across the membrane. In terms of biological role, probably participates in protein translocation into and across both the cytoplasmic and thylakoid membranes in cyanobacterial cells. In Synechococcus sp. (strain CC9605), this protein is Protein translocase subunit SecA.